Reading from the N-terminus, the 243-residue chain is UPF0246 protein M6_Spy1787 (243 aa).

The protein belongs to the UPF0246 family.

This is UPF0246 protein M6_Spy1787 from Streptococcus pyogenes serotype M6 (strain ATCC BAA-946 / MGAS10394).